The chain runs to 194 residues: Naphthalene 1,2-dioxygenase system, small oxygenase component (194 aa).

Belongs to the bacterial ring-hydroxylating dioxygenase beta subunit family. In terms of assembly, the naphthalene dioxygenase (NDO) multicomponent enzyme system is composed of an electron transfer component and a dioxygenase component (iron sulfur protein (ISP)). The electron transfer component is composed of a ferredoxin reductase (NdoR) and a ferredoxin (NdoA), and the dioxygenase component is formed of a heterohexamer (trimer of heterodimers) of three large alpha subunits (NdoB) and three small beta subunits (NdoC).

It functions in the pathway aromatic compound metabolism; naphthalene degradation. Functionally, component of the naphthalene dioxygenase (NDO) multicomponent enzyme system which catalyzes the incorporation of both atoms of molecular oxygen into naphthalene to form cis-(1R,2S)-dihydroxy-1,2-dihydronaphthalene. The beta subunit seems to have a structural role in the holoenzyme. Also able to catalyze the cis-dihydroxylation of biphenyl and phenanthrene. This is Naphthalene 1,2-dioxygenase system, small oxygenase component from Pseudomonas putida (Arthrobacter siderocapsulatus).